The following is a 317-amino-acid chain: Transaldolase (317 aa).

Lys-132 acts as the Schiff-base intermediate with substrate in catalysis.

This sequence belongs to the transaldolase family. Type 1 subfamily. Homodimer.

It is found in the cytoplasm. It catalyses the reaction D-sedoheptulose 7-phosphate + D-glyceraldehyde 3-phosphate = D-erythrose 4-phosphate + beta-D-fructose 6-phosphate. Its pathway is carbohydrate degradation; pentose phosphate pathway; D-glyceraldehyde 3-phosphate and beta-D-fructose 6-phosphate from D-ribose 5-phosphate and D-xylulose 5-phosphate (non-oxidative stage): step 2/3. Its function is as follows. Transaldolase is important for the balance of metabolites in the pentose-phosphate pathway. This chain is Transaldolase (talB), found in Escherichia coli O104:H4 (strain 2009EL-2071).